The following is a 536-amino-acid chain: Inactive phospholipase D5 (536 aa).

At 1–68 (MEIRQHEWLS…DKLEHSQQKC (68 aa)) the chain is on the cytoplasmic side. A helical transmembrane segment spans residues 69–89 (IVIFALVCCFAVLVALIFSAV). The Extracellular portion of the chain corresponds to 90–536 (DIMGEDEDGL…NATGREPLSV (447 aa)). The N-linked (GlcNAc...) asparagine glycan is linked to N121. The 28-residue stretch at 215–242 (NKGRLQSSFWIVDKQHVYIGSAGLDWRS) folds into the PLD phosphodiesterase 1 domain. N-linked (GlcNAc...) asparagine glycosylation occurs at N302. The PLD phosphodiesterase 2 domain maps to 434-460 (FPKLNRNKYMVTDGAAYIGNFDWVGND). The disordered stretch occupies residues 503–536 (QPTKQPNCSSLSKLKSPSKQPAMANATGREPLSV). Positions 511-521 (SSLSKLKSPSK) are enriched in low complexity.

It belongs to the phospholipase D family.

The protein localises to the membrane. The polypeptide is Inactive phospholipase D5 (Pld5) (Mus musculus (Mouse)).